Consider the following 252-residue polypeptide: Transcriptional regulatory protein HptR (252 aa).

The Response regulatory domain maps to 3–118; it reads KVVICDDERI…QLEVILGRLV (116 aa). 4-aspartylphosphate is present on Asp55. One can recognise an HTH araC/xylS-type domain in the interval 153 to 250; that stretch reads NQIVDQIKQS…QMSPSDYCKQ (98 aa). 2 DNA-binding regions (H-T-H motif) span residues 170-191 and 217-240; these read SDLI…KDHV and HYEI…KKYL.

Post-translationally, phosphorylated by HptS.

Its subcellular location is the cytoplasm. Its function is as follows. Member of the two-component regulatory system HptS/HptR that regulates genes involved in hexose phosphate transport system in response to changes in extracellular phosphate sources. Activates uhpT expression to facilitate glucose-6-phosphate/G6P utilization by directly binding to its promoter. Antagonizes CcpA-dependent transcription of a subset of CcpA-regulated genes involved in antibiotic susceptibility. The chain is Transcriptional regulatory protein HptR (hptR) from Staphylococcus aureus (strain NCTC 8325 / PS 47).